The following is a 414-amino-acid chain: Protein MAK11 (414 aa).

S2 bears the N-acetylserine mark. WD repeat units follow at residues 50-78, 90-135, 147-177, 189-221, 238-267, and 298-330; these read AHSL…RIYD, SHQG…MVWR, GHTA…RLWN, LRKY…LIYE, LMHI…HFYP, and GHTN…VVWD. A phosphoserine mark is found at S376 and S380. T382 is modified (phosphothreonine).

In terms of assembly, associates with 60S pre-ribosomal particles.

It localises to the nucleus. Its subcellular location is the nucleolus. The protein localises to the nucleus membrane. Essential for cell growth. Plays a role in assembly of 60S pre-ribosomal particles in the nucleolus. Also required for replication of the M1 double-stranded RNA of the L-A virus. This latter function may reflect an enhanced requirement for free 60S ribosomal particles for the translation of viral mRNAs which lack poly-A tails. This Saccharomyces cerevisiae (strain ATCC 204508 / S288c) (Baker's yeast) protein is Protein MAK11 (MAK11).